A 730-amino-acid chain; its full sequence is Elongation factor 2 (730 aa).

Residues 19-260 (DRIRNIGIVA…MVVKHLPNPL (242 aa)) form the tr-type G domain. GTP is bound by residues 28 to 35 (AHIDHGKT), 94 to 98 (DTPGH), and 148 to 151 (NKVD). Histidine 597 carries the diphthamide modification.

The protein belongs to the TRAFAC class translation factor GTPase superfamily. Classic translation factor GTPase family. EF-G/EF-2 subfamily.

Its subcellular location is the cytoplasm. Catalyzes the GTP-dependent ribosomal translocation step during translation elongation. During this step, the ribosome changes from the pre-translocational (PRE) to the post-translocational (POST) state as the newly formed A-site-bound peptidyl-tRNA and P-site-bound deacylated tRNA move to the P and E sites, respectively. Catalyzes the coordinated movement of the two tRNA molecules, the mRNA and conformational changes in the ribosome. In Methanoculleus marisnigri (strain ATCC 35101 / DSM 1498 / JR1), this protein is Elongation factor 2.